The chain runs to 289 residues: Tachykinins (289 aa).

Residues methionine 1–alanine 24 form the signal peptide. A propeptide spanning residues alanine 25–valine 49 is cleaved from the precursor. The interval glutamate 28–proline 80 is disordered. The residue at position 61 (arginine 61) is an Arginine amide. Over residues glycine 62–alanine 72 the composition is skewed to basic and acidic residues. Asparagine 95 is subject to Asparagine amide. Arginine 110 bears the Arginine amide mark. Valine 155 carries the post-translational modification Valine amide. Residues glycine 156 to aspartate 175 form a disordered region. Arginine amide occurs at positions 167, 198, 237, and 281. A propeptide spanning residues proline 285–glutamate 289 is cleaved from the precursor.

Belongs to the tachykinin family.

The protein localises to the secreted. Functionally, tachykinins are active peptides which excite neurons, evoke behavioral responses, are potent vasodilators and secretagogues, and contract (directly or indirectly) many smooth muscles. Stimulates gut muscle contractions. This Drosophila pseudoobscura pseudoobscura (Fruit fly) protein is Tachykinins.